The sequence spans 609 residues: Membrane protein insertase YidC (609 aa).

The helical transmembrane segment at 9–29 threads the bilayer; sequence IIAIVLSGLILIAWQYFYNIP. The segment at 35-63 is disordered; that stretch reads RAAQQAQSQTAKSPTEPTPNSPKPDHPAA. 4 helical membrane passes run 375-395, 449-469, 507-527, and 546-566; these read VFGN…AIFF, LPMV…FVTI, LLGP…TMWF, and WMPV…VIYW.

The protein belongs to the OXA1/ALB3/YidC family. Type 1 subfamily. In terms of assembly, interacts with the Sec translocase complex via SecD. Specifically interacts with transmembrane segments of nascent integral membrane proteins during membrane integration.

It localises to the cell inner membrane. Required for the insertion and/or proper folding and/or complex formation of integral membrane proteins into the membrane. Involved in integration of membrane proteins that insert both dependently and independently of the Sec translocase complex, as well as at least some lipoproteins. Aids folding of multispanning membrane proteins. This chain is Membrane protein insertase YidC, found in Nitrobacter hamburgensis (strain DSM 10229 / NCIMB 13809 / X14).